Here is a 200-residue protein sequence, read N- to C-terminus: Methylamine utilization protein MauD (200 aa).

A helical membrane pass occupies residues 4–24 (FLIASNILLWLAFLGVTVVML). The region spanning 49-183 (PDIGDAAPEF…LESLLEADRT (135 aa)) is the Thioredoxin domain.

It is found in the membrane. The protein operates within one-carbon metabolism; methylamine degradation. May be specifically involved in the processing, transport, and/or maturation of the MADH beta-subunit. This is Methylamine utilization protein MauD (mauD) from Paracoccus denitrificans.